Reading from the N-terminus, the 291-residue chain is Probable cell wall amidase LytH (291 aa).

Residues 1 to 40 (MKKIDSWLTKHGLKNRLTLVVIVIFIIFLILLFMFVNLSD) form the signal peptide. The SH3b domain occupies 41–105 (EDTGQITITE…WVAGWHTNLN (65 aa)). Positions 122–286 (IVLDPGHGGS…VEQAIVDGLK (165 aa)) constitute a MurNAc-LAA domain. The tract at residues 123 to 147 (VLDPGHGGSDQGASSSTPSKSLEKN) is disordered. Residues 133–142 (QGASSSTPSK) show a composition bias toward polar residues.

It belongs to the N-acetylmuramoyl-L-alanine amidase 3 family.

The protein localises to the secreted. In terms of biological role, probably involved in cell-wall metabolism. This is Probable cell wall amidase LytH (lytH) from Staphylococcus epidermidis (strain ATCC 35984 / DSM 28319 / BCRC 17069 / CCUG 31568 / BM 3577 / RP62A).